Here is a 420-residue protein sequence, read N- to C-terminus: Dihydrolipoyllysine-residue succinyltransferase component of 2-oxoglutarate dehydrogenase complex (420 aa).

One can recognise a Lipoyl-binding domain in the interval 1–76; that stretch reads MAEVKVPELA…EVGQAVAVVG (76 aa). Lys42 carries the post-translational modification N6-lipoyllysine. Residues 75-199 are disordered; sequence VGEGQVNTSN…IREKMSRRKK (125 aa). Positions 81 to 90 are enriched in polar residues; it reads NTSNDSSNES. A compositionally biased stretch (basic and acidic residues) spans 91–102; that stretch reads SQKDEAKEKETP. The span at 103–127 shows a compositional bias: polar residues; it reads KQSNPNSSESENTQDNSQQRINATP. A Peripheral subunit-binding (PSBD) domain is found at 124-160; sequence NATPSARRHARKNGVDLSEVSGKGNDVLRKDDVENSQ. The span at 149 to 158 shows a compositional bias: basic and acidic residues; the sequence is DVLRKDDVEN. Low complexity predominate over residues 159–174; sequence SQKSSSQTAKSESKSQ. Positions 175–186 are enriched in polar residues; sequence NSGSKQTNNNPS. Residues His391 and Asp395 contribute to the active site.

This sequence belongs to the 2-oxoacid dehydrogenase family. As to quaternary structure, forms a 24-polypeptide structural core with octahedral symmetry. Part of the 2-oxoglutarate dehydrogenase (OGDH) complex composed of E1 (2-oxoglutarate dehydrogenase), E2 (dihydrolipoamide succinyltransferase) and E3 (dihydrolipoamide dehydrogenase); the complex contains multiple copies of the three enzymatic components (E1, E2 and E3). It depends on (R)-lipoate as a cofactor.

The enzyme catalyses N(6)-[(R)-dihydrolipoyl]-L-lysyl-[protein] + succinyl-CoA = N(6)-[(R)-S(8)-succinyldihydrolipoyl]-L-lysyl-[protein] + CoA. Its pathway is amino-acid degradation; L-lysine degradation via saccharopine pathway; glutaryl-CoA from L-lysine: step 6/6. E2 component of the 2-oxoglutarate dehydrogenase (OGDH) complex which catalyzes the second step in the conversion of 2-oxoglutarate to succinyl-CoA and CO(2). This is Dihydrolipoyllysine-residue succinyltransferase component of 2-oxoglutarate dehydrogenase complex (odhB) from Staphylococcus epidermidis (strain ATCC 35984 / DSM 28319 / BCRC 17069 / CCUG 31568 / BM 3577 / RP62A).